A 308-amino-acid chain; its full sequence is HTH-type transcriptional activator AllS (308 aa).

Residues Phe2–Thr59 form the HTH lysR-type domain. Positions Phe19 to Lys38 form a DNA-binding region, H-T-H motif.

Belongs to the LysR transcriptional regulatory family.

In terms of biological role, positive regulator essential for the expression of allD operon. Binds to the allD promoter. In Escherichia coli O1:K1 / APEC, this protein is HTH-type transcriptional activator AllS (allS).